Here is a 420-residue protein sequence, read N- to C-terminus: UDP-N-acetylglucosamine 1-carboxyvinyltransferase (420 aa).

Position 23-24 (23-24 (KN)) interacts with phosphoenolpyruvate. A UDP-N-acetyl-alpha-D-glucosamine-binding site is contributed by R92. The Proton donor role is filled by C116. C116 is subject to 2-(S-cysteinyl)pyruvic acid O-phosphothioketal. UDP-N-acetyl-alpha-D-glucosamine-binding positions include 121 to 125 (RPVDL), 161 to 164 (KVSV), D306, and I328.

The protein belongs to the EPSP synthase family. MurA subfamily.

The protein resides in the cytoplasm. It carries out the reaction phosphoenolpyruvate + UDP-N-acetyl-alpha-D-glucosamine = UDP-N-acetyl-3-O-(1-carboxyvinyl)-alpha-D-glucosamine + phosphate. Its pathway is cell wall biogenesis; peptidoglycan biosynthesis. Its function is as follows. Cell wall formation. Adds enolpyruvyl to UDP-N-acetylglucosamine. The chain is UDP-N-acetylglucosamine 1-carboxyvinyltransferase from Photobacterium profundum (strain SS9).